Reading from the N-terminus, the 641-residue chain is Bilirubin reductase (641 aa).

Gln96 contributes to the FMN binding site. Catalysis depends on Arg167, which acts as the Proton donor. Residues Lys214, Arg295, and 317–318 (GR) each bind FMN. [4Fe-4S] cluster contacts are provided by Cys341, Cys344, Cys348, and Cys360. Residues Ala391, Glu410, Gln418, Lys428, and Ala455 each coordinate FAD.

In the N-terminal section; belongs to the NADH:flavin oxidoreductase/NADH oxidase family. Requires FAD as cofactor. FMN is required as a cofactor. [4Fe-4S] cluster serves as cofactor.

It carries out the reaction urobilinogen + 4 A = (4Z,15Z)-bilirubin IXalpha + 4 AH2. The catalysed reaction is urobilinogen + 2 A = (4Z,15Z)-mesobilirubin IXalpha + 2 AH2. It functions in the pathway porphyrin-containing compound metabolism; protoheme degradation. Bilirubin reductase that catalyzes reduction of mesobilirubin and/or bilirubin to urobilinogen, a key step during heme degradation. Urobilinogen then spontaneously degrades into urobilin, which gives urine its distinctive yellow color. The chain is Bilirubin reductase from Mediterraneibacter gnavus (strain CC55_001C).